A 453-amino-acid polypeptide reads, in one-letter code: MGDTRVTVIGGGLAGTEAAWQLARAGVAVELVEMKPERRSPAHVLPGLAELVCSNSLRSDNPLNAVGLLHEELRRLGSLVLGCADETRVPAGDALAVDRERFSEAVTARLTGHAGVRIVHRELEELPPPPALAVIATGPLTADALAARLAETTGGRLHFYDAIAPIVAAESIDRSIAYARSRYGKGSGDDYLNLPLDEAQYHAFVEALLQGEKVAAHGFEEPRYFEGCLPIEVMAERGLEVLAHGPLKPVGLEDPRTGRRPHAVVQLRREDVDGTAWNLVGFQTRLTWPEQRRIFRAFLPGLANAEFVRLGQIHRNTFVDAPRVLAPDLSVRAAPHLFLAGQITGVEGYVESAACGLMAARAVLDRLAGRAFRPPPPATALGALHRHLTGEAHPPGYDYQPSNVVFALFPPLTGRHRGKAGRKEAHVERARKELAPWIDSAPPTAVPAAPAAG.

Gly10–Gly15 serves as a coordination point for FAD. Residues Glu433–Gly453 form a disordered region. Positions Ala441–Gly453 are enriched in low complexity.

Belongs to the MnmG family. TrmFO subfamily. It depends on FAD as a cofactor.

The protein resides in the cytoplasm. It catalyses the reaction uridine(54) in tRNA + (6R)-5,10-methylene-5,6,7,8-tetrahydrofolate + NADH + H(+) = 5-methyluridine(54) in tRNA + (6S)-5,6,7,8-tetrahydrofolate + NAD(+). The enzyme catalyses uridine(54) in tRNA + (6R)-5,10-methylene-5,6,7,8-tetrahydrofolate + NADPH + H(+) = 5-methyluridine(54) in tRNA + (6S)-5,6,7,8-tetrahydrofolate + NADP(+). Catalyzes the folate-dependent formation of 5-methyl-uridine at position 54 (M-5-U54) in all tRNAs. This is Methylenetetrahydrofolate--tRNA-(uracil-5-)-methyltransferase TrmFO from Anaeromyxobacter dehalogenans (strain 2CP-1 / ATCC BAA-258).